We begin with the raw amino-acid sequence, 92 residues long: Small ribosomal subunit protein uS19c (92 aa).

This sequence belongs to the universal ribosomal protein uS19 family.

It is found in the plastid. The protein localises to the chloroplast. Protein S19 forms a complex with S13 that binds strongly to the 16S ribosomal RNA. The polypeptide is Small ribosomal subunit protein uS19c (Oedogonium cardiacum (Filamentous green alga)).